The following is a 689-amino-acid chain: Glycine--tRNA ligase beta subunit (689 aa).

It belongs to the class-II aminoacyl-tRNA synthetase family. In terms of assembly, tetramer of two alpha and two beta subunits.

Its subcellular location is the cytoplasm. The enzyme catalyses tRNA(Gly) + glycine + ATP = glycyl-tRNA(Gly) + AMP + diphosphate. This Edwardsiella ictaluri (strain 93-146) protein is Glycine--tRNA ligase beta subunit.